We begin with the raw amino-acid sequence, 170 residues long: Adenine phosphoribosyltransferase (170 aa).

The protein belongs to the purine/pyrimidine phosphoribosyltransferase family. Homodimer.

It is found in the cytoplasm. The catalysed reaction is AMP + diphosphate = 5-phospho-alpha-D-ribose 1-diphosphate + adenine. It participates in purine metabolism; AMP biosynthesis via salvage pathway; AMP from adenine: step 1/1. In terms of biological role, catalyzes a salvage reaction resulting in the formation of AMP, that is energically less costly than de novo synthesis. In Brevibacillus brevis (strain 47 / JCM 6285 / NBRC 100599), this protein is Adenine phosphoribosyltransferase.